Here is a 175-residue protein sequence, read N- to C-terminus: Large ribosomal subunit protein uL22y (175 aa).

Basic and acidic residues predominate over residues 153–163 (EKEEPVKKEPE). The interval 153–175 (EKEEPVKKEPETQLAAKSKKSAA) is disordered.

The protein belongs to the universal ribosomal protein uL22 family.

The sequence is that of Large ribosomal subunit protein uL22y (RPL17B) from Arabidopsis thaliana (Mouse-ear cress).